The sequence spans 101 residues: Phosphoribosyl-AMP cyclohydrolase (101 aa).

A Mg(2+)-binding site is contributed by Asp-71. Cys-72 provides a ligand contact to Zn(2+). Positions 73 and 75 each coordinate Mg(2+). Zn(2+)-binding residues include Cys-88 and Cys-95.

It belongs to the PRA-CH family. As to quaternary structure, homodimer. Mg(2+) serves as cofactor. Requires Zn(2+) as cofactor.

Its subcellular location is the cytoplasm. The enzyme catalyses 1-(5-phospho-beta-D-ribosyl)-5'-AMP + H2O = 1-(5-phospho-beta-D-ribosyl)-5-[(5-phospho-beta-D-ribosylamino)methylideneamino]imidazole-4-carboxamide. It participates in amino-acid biosynthesis; L-histidine biosynthesis; L-histidine from 5-phospho-alpha-D-ribose 1-diphosphate: step 3/9. In terms of biological role, catalyzes the hydrolysis of the adenine ring of phosphoribosyl-AMP. This Bacillus cereus (strain 03BB102) protein is Phosphoribosyl-AMP cyclohydrolase.